A 466-amino-acid polypeptide reads, in one-letter code: Glutamate-1-semialdehyde 2,1-aminomutase (466 aa).

Lysine 292 carries the N6-(pyridoxal phosphate)lysine modification.

This sequence belongs to the class-III pyridoxal-phosphate-dependent aminotransferase family. HemL subfamily. Homodimer. It depends on pyridoxal 5'-phosphate as a cofactor.

It is found in the cytoplasm. It carries out the reaction (S)-4-amino-5-oxopentanoate = 5-aminolevulinate. It functions in the pathway porphyrin-containing compound metabolism; protoporphyrin-IX biosynthesis; 5-aminolevulinate from L-glutamyl-tRNA(Glu): step 2/2. In Tropheryma whipplei (strain TW08/27) (Whipple's bacillus), this protein is Glutamate-1-semialdehyde 2,1-aminomutase.